The sequence spans 3507 residues: Dynein axonemal heavy chain 14 (3507 aa).

The disordered stretch occupies residues 91-126 (PHLPGTQDPLRRVRDPTPIVASSPGRRRGSWSGGYG). Residues 354-381 (DEFCEEQLQQATQALKQLEDIRNKAISE) are a coiled coil. The GPAGTGKT motif signature appears at 1164-1171 (GPAGTGKT). ATP is bound by residues 1164 to 1171 (GPAGTGKT) and 1427 to 1434 (GPTGGGKT). A glycan (N-linked (GlcNAc...) asparagine) is linked at N1818.

Belongs to the dynein heavy chain family. In terms of assembly, consists of at least two heavy chains and a number of intermediate and light chains.

The protein resides in the cytoplasm. The protein localises to the cytoskeleton. Its subcellular location is the cilium axoneme. Functionally, force generating protein of respiratory cilia. Produces force towards the minus ends of microtubules. Dynein has ATPase activity; the force-producing power stroke is thought to occur on release of ADP. Involved in sperm motility; implicated in sperm flagellar assembly. This is Dynein axonemal heavy chain 14 (DNAH14) from Homo sapiens (Human).